A 717-amino-acid polypeptide reads, in one-letter code: Glycine--tRNA ligase beta subunit (717 aa).

This sequence belongs to the class-II aminoacyl-tRNA synthetase family. Tetramer of two alpha and two beta subunits.

Its subcellular location is the cytoplasm. The enzyme catalyses tRNA(Gly) + glycine + ATP = glycyl-tRNA(Gly) + AMP + diphosphate. In Gloeothece citriformis (strain PCC 7424) (Cyanothece sp. (strain PCC 7424)), this protein is Glycine--tRNA ligase beta subunit.